The sequence spans 567 residues: Hexose transporter HXT11 (567 aa).

The segment covering 1 to 22 (MSGVNNTSANELSTTMSNSNSA) has biased composition (polar residues). Residues 1–45 (MSGVNNTSANELSTTMSNSNSAVGAPSVKTEHGDSKNSLNLDANE) form a disordered region. Topologically, residues 1–56 (MSGVNNTSANELSTTMSNSNSAVGAPSVKTEHGDSKNSLNLDANEPPIDLPQKPLS) are cytoplasmic. The helical transmembrane segment at 57-77 (AYTTVAILCLMIAFGGFIFGW) threads the bilayer. Over 78–112 (DTGTISGFVNLSDFIRRFGQKNDKGTYYLSKVRMG) the chain is Extracellular. N-linked (GlcNAc...) asparagine glycosylation occurs at N87. A helical membrane pass occupies residues 113–133 (LIVSIFNIGCAIGGIVLSKVG). The Cytoplasmic portion of the chain corresponds to 134 to 139 (DIYGRR). Residues 140 to 160 (IGLITVTAIYVVGILIQITSI) traverse the membrane as a helical segment. The Extracellular portion of the chain corresponds to 161-170 (NKWYQYFIGR). Residues 171–191 (IISGLGVGGIAVLSPMLISEV) traverse the membrane as a helical segment. Over 192-197 (APKHIR) the chain is Cytoplasmic. The helical transmembrane segment at 198-218 (GTLVQLYQLMGTMGIFLGYCT) threads the bilayer. At 219-232 (NYGTKNYHNATQWR) the chain is on the extracellular side. The N-linked (GlcNAc...) asparagine glycan is linked to N227. A helical transmembrane segment spans residues 233–253 (VGLGLCFAWATFMVSGMMFVP). At 254–336 (ESPRYLIEVG…IQSLQQLTGD (83 aa)) the chain is on the cytoplasmic side. The helical transmembrane segment at 337 to 353 (NYFFYYGTTIFKSVGLK) threads the bilayer. The Extracellular portion of the chain corresponds to 354–359 (DSFQTS). The chain crosses the membrane as a helical span at residues 360–377 (IIIGVVNFFSSFIAVYTI). At 378-384 (ERFGRRT) the chain is on the cytoplasmic side. Residues 385-405 (CLLWGAASMLCCFAVFASVGV) traverse the membrane as a helical segment. At 406-429 (TKLWPQGSSHQDITSQGAGNCMIV) the chain is on the extracellular side. A helical transmembrane segment spans residues 430–450 (FTMFFIFSFATTWAGGCYVIV). Topologically, residues 451-467 (SETFPLRVKSRGMAIAT) are cytoplasmic. Residues 468–488 (AANWMWGFLISFFTPFITGAI) form a helical membrane-spanning segment. Position 489 (N489) is a topological domain, extracellular. A helical transmembrane segment spans residues 490 to 510 (FYYGYVFLGCLVFAYFYVFFF). The Cytoplasmic portion of the chain corresponds to 511–567 (VPETKGLTLEEVNTMWLEGVPAWKSASWVPPERRTADYDADAIDHDNRPIYKRFFSS).

The protein belongs to the major facilitator superfamily. Sugar transporter (TC 2.A.1.1) family.

The protein resides in the membrane. Functionally, probable glucose transporter. The polypeptide is Hexose transporter HXT11 (HXT11) (Saccharomyces cerevisiae (strain ATCC 204508 / S288c) (Baker's yeast)).